Reading from the N-terminus, the 427-residue chain is Mitochondrial distribution and morphology protein 10 (427 aa).

Positions 393–414 (SSYANSQATAGAQGSSGGPPTS) are enriched in low complexity. The tract at residues 393-427 (SSYANSQATAGAQGSSGGPPTSYWRGVGVSVSYSS) is disordered.

This sequence belongs to the MDM10 family. As to quaternary structure, component of the ER-mitochondria encounter structure (ERMES) or MDM complex, composed of mmm1, mdm10, mdm12 and mdm34. Associates with the mitochondrial outer membrane sorting assembly machinery SAM(core) complex.

It localises to the mitochondrion outer membrane. In terms of biological role, component of the ERMES/MDM complex, which serves as a molecular tether to connect the endoplasmic reticulum and mitochondria. Components of this complex are involved in the control of mitochondrial shape and protein biogenesis and may function in phospholipid exchange. mdm10 is involved in the late assembly steps of the general translocase of the mitochondrial outer membrane (TOM complex). Functions in the tom40-specific route of the assembly of outer membrane beta-barrel proteins, including the association of tom40 with the receptor tom22 and small TOM proteins. Can associate with the SAM(core) complex as well as the mdm12-mmm1 complex, both involved in late steps of the major beta-barrel assembly pathway, that is responsible for biogenesis of all outer membrane beta-barrel proteins. May act as a switch that shuttles between both complexes and channels precursor proteins into the tom40-specific pathway. Plays a role in mitochondrial morphology and in the inheritance of mitochondria. The chain is Mitochondrial distribution and morphology protein 10 (mdmB) from Emericella nidulans (strain FGSC A4 / ATCC 38163 / CBS 112.46 / NRRL 194 / M139) (Aspergillus nidulans).